Reading from the N-terminus, the 267-residue chain is Undecaprenyl-diphosphatase (267 aa).

A run of 7 helical transmembrane segments spans residues 4 to 24, 41 to 61, 69 to 89, 96 to 116, 173 to 193, 207 to 227, and 239 to 259; these read LYAL…ISST, FWKS…IFVF, LDIW…GLFV, LFNG…FILI, AAEF…AYSI, IPLG…IKFF, and FGIY…SGIL.

This sequence belongs to the UppP family.

The protein resides in the cell inner membrane. The enzyme catalyses di-trans,octa-cis-undecaprenyl diphosphate + H2O = di-trans,octa-cis-undecaprenyl phosphate + phosphate + H(+). Functionally, catalyzes the dephosphorylation of undecaprenyl diphosphate (UPP). Confers resistance to bacitracin. This is Undecaprenyl-diphosphatase from Campylobacter jejuni subsp. jejuni serotype O:23/36 (strain 81-176).